Reading from the N-terminus, the 171-residue chain is CASP-like protein 1C3 (171 aa).

Topologically, residues 1–6 are cytoplasmic; that stretch reads MVKPKR. Residues 7–27 traverse the membrane as a helical segment; sequence LLSLLLRLIAFGATLAAVIIM. The Extracellular segment spans residues 28 to 52; it reads ATSHEKGSFFALSYEAKYSDTPAFK. The helical transmembrane segment at 53 to 73 threads the bilayer; sequence YFVIANAIVTVYGFLALFIPS. At 74–79 the chain is on the cytoplasmic side; sequence ESPLWR. The chain crosses the membrane as a helical span at residues 80–100; sequence LVLALDLVFTMLLISSISAAL. The Extracellular portion of the chain corresponds to 101–130; that stretch reads AVAQVGKKGNSSAGWLPVCGQVTKYCNQVT. Asn110 carries an N-linked (GlcNAc...) asparagine glycan. The helical transmembrane segment at 131–151 threads the bilayer; sequence GALVAGFIAIITYIILLLYSI. The Cytoplasmic portion of the chain corresponds to 152–171; that stretch reads YTFLNSLLGKTPCRLSSPGI.

This sequence belongs to the Casparian strip membrane proteins (CASP) family. As to quaternary structure, homodimer and heterodimers.

It localises to the cell membrane. The polypeptide is CASP-like protein 1C3 (Populus trichocarpa (Western balsam poplar)).